We begin with the raw amino-acid sequence, 8903 residues long: Nonribosomal peptide synthetase vlms (8903 aa).

The region spanning 11–84 (GSCRTTLGKV…ELADSIDEQN (74 aa)) is the Carrier 1 domain. Residues 13-81 (CRTTLGKVAA…TLAELADSID (69 aa)) are thiolation (T) domain 1. Residue Ser45 is modified to O-(pantetheine 4'-phosphoryl)serine. 2 adenylation (A) domain regions span residues 59 to 736 (GIWV…SHLP) and 989 to 1386 (MAAQ…IKIR). The tract at residues 572 to 953 (VPHQLDTEKL…FLLDGVNMSI (382 aa)) is condensation (C) domain 1. One can recognise a Carrier 2 domain in the interval 1524-1600 (SSMSTVEQEL…QLALAAESQA (77 aa)). Residues 1529-1597 (VEQELRQIWS…TIPQLALAAE (69 aa)) are thiolation (T) domain 2. Position 1561 is an O-(pantetheine 4'-phosphoryl)serine (Ser1561). Residues 1613–2050 (FPLSPIQKMY…TVKELAAVSA (438 aa)) form an epimerase (E) domain 1 region. The condensation (C) domain 2 stretch occupies residues 2091 to 2523 (DILPCSPIQQ…LLSVSEENKL (433 aa)). Residues 2546 to 2943 (MSSHADATAI…GRQDSQVKIR (398 aa)) are adenylation (A) domain 2. One can recognise a Carrier 3 domain in the interval 3084 to 3160 (LFTTAIERQL…ELALQAKMVD (77 aa)). Residues 3089–3157 (IERQLRQVWS…TIPELALQAK (69 aa)) form a thiolation (T) domain 3 region. O-(pantetheine 4'-phosphoryl)serine is present on Ser3121. An epimerase (E) domain 2 region spans residues 3174-3614 (FALSPIQQMY…AIKSLVEELM (441 aa)). The condensation (C) domain 3 stretch occupies residues 3655–4093 (EDILPCSPMQ…LMSTKDIQQL (439 aa)). The interval 4114–4512 (ERLNTQPESM…GRIDTQIKIR (399 aa)) is adenylation (A) domain 3. The Carrier 4 domain occupies 4649–4725 (APRTTMEKKL…DLAEATELKC (77 aa)). A thiolation (T) domain 4 region spans residues 4654–4722 (MEKKLRDLFA…ILADLAEATE (69 aa)). Ser4686 carries the O-(pantetheine 4'-phosphoryl)serine modification. Residues 4775–5191 (EDVYPCSPLQ…AQLQMLSEED (417 aa)) are condensation (C) domain 4. The interval 5216-5614 (ETMTSQPDAP…GRRDTQVKIR (399 aa)) is adenylation (A) domain 4. The 77-residue stretch at 5753 to 5829 (APTTAMEKRL…DLAQELEQRH (77 aa)) folds into the Carrier 5 domain. The interval 5758–5826 (MEKRLQNLFC…RLGDLAQELE (69 aa)) is thiolation (T) domain 5. Position 5790 is an O-(pantetheine 4'-phosphoryl)serine (Ser5790). Position 5875 (Glu5875) is a region of interest, condensation (C) domain 5. Residues 6311-6702 (EEQMSLRPSE…GRMDGQIKIR (392 aa)) are adenylation (A) domain 5. Residues 6836-6912 (SSATNTERQL…ELAATLEVMD (77 aa)) form the Carrier 6 domain. The thiolation (T) domain 6 stretch occupies residues 6841–6909 (TERQLRQIWS…TIPELAATLE (69 aa)). The residue at position 6873 (Ser6873) is an O-(pantetheine 4'-phosphoryl)serine. Positions 6923–7349 (GFFELSPIQR…YGRTIKTLVE (427 aa)) are epimerase (E) domain 3. A condensation (C) domain 6 region spans residues 7391–7823 (EDILPCSPIQ…LVLTNDEAQI (433 aa)). The segment at 7844–8240 (EQMARKPEAQ…LDRIGTQVKI (397 aa)) is adenylation (A) domain 6. The region spanning 8368–8444 (APISATEAVF…AMAACVSDVS (77 aa)) is the Carrier 7 domain. The interval 8369 to 8441 (PISATEAVFC…VLHAMAACVS (73 aa)) is thiolation (T) domain 7. Ser8405 carries the post-translational modification O-(pantetheine 4'-phosphoryl)serine. The segment at 8482–8897 (DVLPTTEFQT…MENPRSTVGH (416 aa)) is condensation (C) domain 7.

It belongs to the NRP synthetase family.

It functions in the pathway secondary metabolite biosynthesis. Nonribosomal peptide synthetase; part of the gene cluster that mediates the biosynthesis of verlamelin, a lipopeptide that exhibits antifungal activity against plant pathogenic fungi. Verlamelin is a cyclic hexadepsipeptide and is bridged by ester bonding between a 5-hydroxytetradecanoic acid moiety and a carboxyl group on the terminal Val of amide-bonded tetradecanoyl-hexapeptide D-allo-Thr-D-Ala-L-Pro-L-Gln-D-Tyr-L-Val. VlmA and vlmB are altogether regarded as essential components in the biosynthesis of 5-hydroxytetradecanoic acid. VlmA catalyzes the hydroxylation at position C5 of tetradecanoic acid produced in primary metabolism, while the precise function of vlmB still remains to be solved. To be loaded onto the waiting NRPS, 5-hydroxytetradecanoic acid is activated in the form of acyladenylate by the AMP-dependent ligase vlmC. VlmS seems to accept the fatty-acyl intermediate onto the initial module to further elongate amino acid residues by the downstream modules. In addition, in the last module at its C-terminus, vlmS contains a surplus condensation (C) domain that may be involved in cyclization, the last step to form verlamelin. The chain is Nonribosomal peptide synthetase vlms from Lecanicillium sp.